Consider the following 261-residue polypeptide: Indole-3-glycerol phosphate synthase (261 aa).

Belongs to the TrpC family.

The catalysed reaction is 1-(2-carboxyphenylamino)-1-deoxy-D-ribulose 5-phosphate + H(+) = (1S,2R)-1-C-(indol-3-yl)glycerol 3-phosphate + CO2 + H2O. It participates in amino-acid biosynthesis; L-tryptophan biosynthesis; L-tryptophan from chorismate: step 4/5. The polypeptide is Indole-3-glycerol phosphate synthase (Burkholderia mallei (strain NCTC 10247)).